Reading from the N-terminus, the 1756-residue chain is MNSLFRKRNKGKYSPTVQTRSISNKELSELIEQLQKNADQVEKNIVDTEAKMQSDLARLQEGRQPEHRDVTLQKVLDSEKLLYVLEADAAIAKHMKHPQGDMIAEDIRQLKERVTNLRGKHKQIYRLAVKEVDPQVNWAALVEEKLDKLNNQSFGTDLPLVDHQVEEHNIFHNEVKAIGPHLAKDGDKEQNSELRAKYQKLLAASQARQQHLSSLQDYMQRCTNELYWLDQQAKGRMQYDWSDRNLDYPSRRRQYENFINRNLEAKEERINKLHSEGDQLLAAEHPGRNSIEAHMEAVHADWKEYLNLLICEESHLKYMEDYHQFHEDVKDAQELLRKVDSDLNQKYGPDFKDRYQIELLLRELDDQEKVLDKYEDVVQGLQKRGQQVVPLKYRRETPLKPIPVEALCDFEGEQGLISRGYSYTLQKNNGESWELMDSAGNKLIAPAVCFVIPPTDPEALALADSLGSQYRSVRQKAAGSKRTLQQRYEVLKTENPGDASDLQGRQLLAGLDKVASDLDRQEKAITGILRPPLEQGRAVQDSAERAKDLKNITNELLRIEPEKTRSTAEGEAFIQALPGSGTTPLLRTRVEDTNRKYEHLLQLLDLAQEKVDVANRLEKSLQQSWELLATHENHLNQDDTVPESSRVLDSKGQELAAMACELQAQKSLLGEVEQNLQAAKQCSSTLASRFQEHCPDLERQEAEVHKLGQRFNNLRQQVERRAQSLQSAKAAYEHFHRGHDHVLQFLVSIPSYEPQETDSLSQMETKLKNQKNLLDEIASREQEVQKICANSQQYQQAVKDYELEAEKLRSLLDLENGRRSHVSKRARLQSPATKVKEEEAALAAKFTEVYAINRQRLQNLEFALNLLRQQPEVEVTHETLQRNRPDSGVEEAWKIRKELDEETERRRQLENEVKSTQEEIWTLRNQGPQESVVRKEVLKKVPDPVLEESFQQLQRTLAEEQHKNQLLQEELEALQLQLRALEQETRDGGQEYVVKEVLRIEPDRAQADEVLQLREELEALRRQKGAREAEVLLLQQRVAALAEEKSRAQEKVTEKEVVKLQNDPQLEAEYQQLQEDHQRQDQLREKQEEELSFLQDKLKRLEKERAMAEGKITVKEVLKVEKDAATEREVSDLTRQYEDEAAKARASQREKTELLRKIWALEEENAKVVVQEKVREIVRPDPKAESEVANLRLELVEQERKYRGAEEQLRSYQSELEALRRRGPQVEVKEVTKEVIKYKTDPEMEKELQRLREEIVDKTRLIERCDLEIYQLKKEIQALKDTKPQVQTKEVVQEILQFQEDPQTKEEVASLRAKLSEEQKKQVDLERERASQEEQIARKEEELSRVKERVVQQEVVRYEEEPGLRAEASAFAESIDVELRQIDKLRAELRRLQRRRTELERQLEELERERQARREAEREVQRLQQRLAALEQEEAEAREKVTHTQKVVLQQDPQQAREHALLRLQLEEEQHRRQLLEGELETLRRKLAALEKAEVKEKVVLSESVQVEKGDTEQEIQRLKSSLEEESRSKRELDVEVSRLEARLSELEFHNSKSSKELDFLREENHKLQLERQNLQLETRRLQSEINMAATETRDLRNMTVADSGTNHDSRLWSLERELDDLKRLSKDKDLEIDELQKRLGSVAVKREQRENHLRRSIVVIHPDTGRELSPEEAHRAGLIDWNMFVKLRSQECDWEEISVKGPNGESSVIHDRKSGKKFSIEEALQSGRLTPAQYDRYVNKDMSIQELAVLVSGQK.

The residue at position 14 (S14) is a Phosphoserine. 2 coiled-coil regions span residues T16–Y125 and K188–V389. Spectrin repeat units lie at residues Q216 to K317, H323 to Q485, R505 to D612, and E733 to E861. An SH3 domain is found at L399–T455. The residue at position 465 (S465) is a Phosphoserine. 2 coiled-coil regions span residues L585–S820 and D886–V1645. A phosphoserine mark is found at S887, S949, S1584, and S1657. Positions E1557–K1756 are interacts with BFSP2 and VIM. 2 Plectin repeats span residues E1651–F1685 and V1700–Y1735.

This sequence belongs to the plakin or cytolinker family. In terms of assembly, homodimer or a heterodimer with EVPL. Found in a complex composed of PPL (via C-terminal linker domain), BFSP1 and BFSP2 in the retinal lens. Within the complex interacts (via C-terminal linker domain) with BFSP2. Interacts with VIM. Binds to the PH domain of AKT1. Interacts with FCGR1A. May interact with PPHLN1. As to expression, expressed in stratified squamous epithelia and in some other epithelia.

The protein resides in the cell junction. The protein localises to the desmosome. It localises to the cytoplasm. Its subcellular location is the cytoskeleton. It is found in the cell membrane. Functionally, component of the cornified envelope of keratinocytes. May link the cornified envelope to desmosomes and intermediate filaments. May act as a localization signal in PKB/AKT-mediated signaling. In Homo sapiens (Human), this protein is Periplakin (PPL).